Consider the following 365-residue polypeptide: Putative F-box/kelch-repeat protein At4g39290 (365 aa).

The 49-residue stretch at 10–58 folds into the F-box domain; the sequence is QMTFSMLPDDLVLNCLARVSKVYYPSLSFVSKKFRSLIASTELQELRSF. 2 Kelch repeats span residues 118–165 and 167–213; these read DIYA…CVLN and KIYV…KIVG.

In Arabidopsis thaliana (Mouse-ear cress), this protein is Putative F-box/kelch-repeat protein At4g39290.